Here is an 858-residue protein sequence, read N- to C-terminus: Elongation factor 2 (858 aa).

One can recognise a tr-type G domain in the interval A17–V362. A26–S33 is a GTP binding site. T54 is modified (phosphothreonine). T57 carries the post-translational modification Phosphothreonine; by EEF2K. Position 59 is a phosphothreonine (T59). At K152 the chain carries N6-succinyllysine. GTP is bound by residues N158 to D161 and S216 to L218. K235 bears the N6-acetyllysine mark. K239 is modified (N6-acetyllysine; alternate). K239 is covalently cross-linked (Glycyl lysine isopeptide (Lys-Gly) (interchain with G-Cter in SUMO1); alternate). At Y265 the chain carries Phosphotyrosine; by CSK. At K272 the chain carries N6-acetyllysine; alternate. K272 bears the N6-succinyllysine; alternate mark. K275 bears the N6-acetyllysine mark. K322 is covalently cross-linked (Glycyl lysine isopeptide (Lys-Gly) (interchain with G-Cter in SUMO)). A Phosphoserine modification is found at S325. A Phosphotyrosine; by CSK modification is found at Y373. T435 is modified (phosphothreonine). 2 positions are modified to N6-acetyllysine: K439 and K445. Phosphoserine is present on S502. An N6,N6,N6-trimethyllysine; by EEF2KMT modification is found at K525. K529 participates in a covalent cross-link: Glycyl lysine isopeptide (Lys-Gly) (interchain with G-Cter in SUMO). K572 carries the post-translational modification N6-succinyllysine. The residue at position 595 (S595) is a Phosphoserine; by CDK2. Position 619 is an N6-acetyllysine (K619). At H715 the chain carries Diphthamide.

It belongs to the TRAFAC class translation factor GTPase superfamily. Classic translation factor GTPase family. EF-G/EF-2 subfamily. In terms of assembly, binds to 80S ribosomes. Actively translating ribosomes show mutually exclusive binding of eIF5a (EIF5A or EIF5A2) and EEF2/eEF2. Interacts with SERBP1; interaction sequesters EEF2/eEF2 at the A-site of the ribosome, thereby blocking the interaction sites of the mRNA-tRNA complex, promoting ribosome stabilization and hibernation. Interacts with HABP4; interaction takes place at the A-site of hibernating ribosomes and promotes ribosome stabilization. Component of the mRNA surveillance SURF complex, at least composed of ERF1, ERF3 (ERF3A or ERF3B), EEF2, UPF1/RENT1, SMG1, SMG8 and SMG9. Interacts with RBPMS2. Phosphorylation by EF-2 kinase completely inactivates EF-2; it requires prior phosphorylation by CDK2 at Ser-595 during mitotic prometaphase. Phosphorylation by CSK promotes SUMOylation, proteolytic cleavage, and nuclear translocation if the C-terminal fragment. In terms of processing, diphthamide is 2-[3-carboxyamido-3-(trimethyl-ammonio)propyl]histidine. Post-translationally, ISGylated. Proteolytically processed at two sites following phosphorylation by CSK. In terms of processing, SUMOylated following phosphorylation by CSK, promotes proteolytic cleavage.

It is found in the cytoplasm. The protein resides in the nucleus. It catalyses the reaction GTP + H2O = GDP + phosphate + H(+). Catalyzes the GTP-dependent ribosomal translocation step during translation elongation. During this step, the ribosome changes from the pre-translocational (PRE) to the post-translocational (POST) state as the newly formed A-site-bound peptidyl-tRNA and P-site-bound deacylated tRNA move to the P and E sites, respectively. Catalyzes the coordinated movement of the two tRNA molecules, the mRNA and conformational changes in the ribosome. The chain is Elongation factor 2 (Eef2) from Mus musculus (Mouse).